The primary structure comprises 375 residues: Ketohexokinase (375 aa).

Asp-319 is a binding site for beta-D-fructose.

This sequence belongs to the carbohydrate kinase PfkB family. As to quaternary structure, homodimer.

It catalyses the reaction beta-D-fructose + ATP = beta-D-fructose 1-phosphate + ADP + H(+). It participates in carbohydrate metabolism; fructose metabolism. With respect to regulation, activated in the presence of 0.5 M KCl. 85% activity at 3.5 M KCl. 60% activity without KCl. In terms of biological role, catalyzes the ATP-dependent phosphorylation of the ketose sugar fructose to fructose-1-phosphate. Does not produce fructose-6-phosphate. The sugars D-glucose, D-galactose, L-rhamnose, D-xylose, L-arabinose and D-ribose are not substrates of this enzyme. In Haloferax volcanii (strain ATCC 29605 / DSM 3757 / JCM 8879 / NBRC 14742 / NCIMB 2012 / VKM B-1768 / DS2) (Halobacterium volcanii), this protein is Ketohexokinase.